Consider the following 444-residue polypeptide: Lycopaoctaene synthase (444 aa).

Residues Arg48 and Arg73 each contribute to the NADP(+) site. 3 residues coordinate Mg(2+): Asp76, Glu79, and Asp80. NADP(+) contacts are provided by Arg215, Lys315, and Arg317. 2 helical membrane passes run 391-411 (TAMV…AYVY) and 415-435 (GTSL…IGLF).

This sequence belongs to the phytoene/squalene synthase family. Mg(2+) is required as a cofactor.

It localises to the membrane. The enzyme catalyses 2 (2E,6E)-farnesyl diphosphate + NADH + H(+) = squalene + 2 diphosphate + NAD(+). The catalysed reaction is 2 (2E,6E)-farnesyl diphosphate + NADPH + H(+) = squalene + 2 diphosphate + NADP(+). It catalyses the reaction 2 (2E,6E,10E)-geranylgeranyl diphosphate + NADPH + H(+) = all-trans-lycopaoctaene + 2 diphosphate + NADP(+). Converts the C20 geranylgeranyl diphosphate (GGPP) to the C40 lycopaoctaene, the first committed intermediate in the production of lycopadiene. Converts farnesyl diphosphate (FPP) into squalene, a precursor for sterol biosynthesis in eukaryotes. Converts with low efficiency the C20 phytyl diphosphate (PPP) to the C40 lycopadiene in vitro. This reaction may not have biological significance in vivo. This chain is Lycopaoctaene synthase, found in Botryococcus braunii (Green alga).